A 217-amino-acid polypeptide reads, in one-letter code: Thymidylate kinase (217 aa).

16-23 is a binding site for ATP; sequence GIDGAGKT.

The protein belongs to the thymidylate kinase family.

It carries out the reaction dTMP + ATP = dTDP + ADP. Functionally, phosphorylation of dTMP to form dTDP in both de novo and salvage pathways of dTTP synthesis. The sequence is that of Thymidylate kinase from Xylella fastidiosa (strain M23).